A 312-amino-acid polypeptide reads, in one-letter code: Small ribosomal subunit protein RACK1 (312 aa).

WD repeat units lie at residues 9–42, 63–93, 105–135, 148–180, 192–222, 233–262, and 279–307; these read GHRG…ISWK, GHTG…RMWD, KHTK…RVWN, GHED…KVWN, GHSN…LLWD, NVES…SVYD, and PSEC…RVWS.

Belongs to the WD repeat G protein beta family. Ribosomal protein RACK1 subfamily.

The polypeptide is Small ribosomal subunit protein RACK1 (Leishmania major).